The chain runs to 374 residues: Alanine racemase (374 aa).

The Proton acceptor; specific for D-alanine role is filled by lysine 34. At lysine 34 the chain carries N6-(pyridoxal phosphate)lysine. Substrate is bound at residue arginine 147. Tyrosine 271 acts as the Proton acceptor; specific for L-alanine in catalysis. Methionine 319 is a binding site for substrate.

It belongs to the alanine racemase family. It depends on pyridoxal 5'-phosphate as a cofactor.

It catalyses the reaction L-alanine = D-alanine. It participates in amino-acid biosynthesis; D-alanine biosynthesis; D-alanine from L-alanine: step 1/1. Functionally, catalyzes the interconversion of L-alanine and D-alanine. May also act on other amino acids. The sequence is that of Alanine racemase (alr) from Haemophilus ducreyi (strain 35000HP / ATCC 700724).